The sequence spans 156 residues: ATP synthase subunit b (156 aa).

A helical transmembrane segment spans residues 3–23 (INFTLLAQALAFAGLIWIIAT).

This sequence belongs to the ATPase B chain family. In terms of assembly, F-type ATPases have 2 components, F(1) - the catalytic core - and F(0) - the membrane proton channel. F(1) has five subunits: alpha(3), beta(3), gamma(1), delta(1), epsilon(1). F(0) has three main subunits: a(1), b(2) and c(10-14). The alpha and beta chains form an alternating ring which encloses part of the gamma chain. F(1) is attached to F(0) by a central stalk formed by the gamma and epsilon chains, while a peripheral stalk is formed by the delta and b chains.

The protein localises to the cell inner membrane. F(1)F(0) ATP synthase produces ATP from ADP in the presence of a proton or sodium gradient. F-type ATPases consist of two structural domains, F(1) containing the extramembraneous catalytic core and F(0) containing the membrane proton channel, linked together by a central stalk and a peripheral stalk. During catalysis, ATP synthesis in the catalytic domain of F(1) is coupled via a rotary mechanism of the central stalk subunits to proton translocation. Functionally, component of the F(0) channel, it forms part of the peripheral stalk, linking F(1) to F(0). The sequence is that of ATP synthase subunit b from Stenotrophomonas maltophilia (strain R551-3).